The chain runs to 572 residues: Proline--tRNA ligase (572 aa).

It belongs to the class-II aminoacyl-tRNA synthetase family. ProS type 1 subfamily. As to quaternary structure, homodimer.

The protein resides in the cytoplasm. The catalysed reaction is tRNA(Pro) + L-proline + ATP = L-prolyl-tRNA(Pro) + AMP + diphosphate. In terms of biological role, catalyzes the attachment of proline to tRNA(Pro) in a two-step reaction: proline is first activated by ATP to form Pro-AMP and then transferred to the acceptor end of tRNA(Pro). As ProRS can inadvertently accommodate and process non-cognate amino acids such as alanine and cysteine, to avoid such errors it has two additional distinct editing activities against alanine. One activity is designated as 'pretransfer' editing and involves the tRNA(Pro)-independent hydrolysis of activated Ala-AMP. The other activity is designated 'posttransfer' editing and involves deacylation of mischarged Ala-tRNA(Pro). The misacylated Cys-tRNA(Pro) is not edited by ProRS. The protein is Proline--tRNA ligase of Klebsiella pneumoniae subsp. pneumoniae (strain ATCC 700721 / MGH 78578).